Consider the following 1023-residue polypeptide: Sodium/potassium-transporting ATPase subunit alpha-1 (1023 aa).

Residues 1-5 constitute a propeptide that is removed on maturation; it reads MGLGK. Residues 1-11 show a composition bias toward basic and acidic residues; the sequence is MGLGKGKDEYK. Positions 1–33 are disordered; sequence MGLGKGKDEYKLAATSEDGGKKDKKAKAKKDMD. The Cytoplasmic portion of the chain corresponds to 6–87; it reads GKDEYKLAAT…NALTPPPTTP (82 aa). Ser16 is subject to Phosphoserine; by PKC. Residues 82 to 84 are interaction with phosphoinositide-3 kinase; it reads PPP. Residues 88–108 traverse the membrane as a helical segment; sequence EWVKFCKQLFGGFSMLLWIGA. The Extracellular portion of the chain corresponds to 109–131; the sequence is ILCFLAYGIQAASEDEPANDNLY. Residues 132–152 traverse the membrane as a helical segment; the sequence is LGIVLSAVVIITGCFSYYQEA. The Cytoplasmic portion of the chain corresponds to 153-288; the sequence is KSSKIMESFK…GGKTPIAIEI (136 aa). The disordered stretch occupies residues 216–237; the sequence is SSLTGESEPQTRSPDFSNENPL. A helical transmembrane segment spans residues 289 to 308; it reads EHFIHIITGVAVFLGVSFFI. At 309-320 the chain is on the extracellular side; that stretch reads LSLILGYNWLEA. A helical transmembrane segment spans residues 321 to 338; the sequence is VIFLIGIIVANVPEGLLA. Topologically, residues 339–772 are cytoplasmic; it reads TVTVCLTLTA…EEGRLIFDNL (434 aa). The 4-aspartylphosphate intermediate role is filled by Asp376. Lys487 contributes to the ATP binding site. Residues Asp717 and Asp721 each coordinate Mg(2+). A helical membrane pass occupies residues 773–792; that stretch reads KKSIAYTLTSNIPEISPFLL. Residues 793–802 are Extracellular-facing; the sequence is FIIANIPLPL. A helical transmembrane segment spans residues 803 to 823; sequence GTVTILCIDLGTDMVPAISLA. Topologically, residues 824-843 are cytoplasmic; sequence YEKAESDIMKRQPRNPKTDK. A helical transmembrane segment spans residues 844–866; it reads LVNERLISIAYGQIGMMQATAGF. At 867 to 918 the chain is on the extracellular side; sequence FTYFVILAENGFLPMDLIGVRVLWDDKYVNDLEDSYGQQWTYERRKIVEYSC. The helical transmembrane segment at 919-938 threads the bilayer; the sequence is HTAFFASIVIVQWADLIICK. At 939 to 951 the chain is on the cytoplasmic side; sequence TRRNSIVQQGMTN. Ser943 bears the Phosphoserine; by PKA mark. The chain crosses the membrane as a helical span at residues 952 to 970; sequence RILIFGLFEETALAAFLSY. Topologically, residues 971–985 are extracellular; the sequence is CPGMDVALRMYPMKP. Residues 986–1006 form a helical membrane-spanning segment; sequence LWWFCAFPYSLLIFLYDEARR. The Cytoplasmic portion of the chain corresponds to 1007 to 1023; that stretch reads YILRRNPGGWVEKETYY.

It belongs to the cation transport ATPase (P-type) (TC 3.A.3) family. Type IIC subfamily. The sodium/potassium-transporting ATPase is composed of a catalytic alpha subunit, an auxiliary non-catalytic beta subunit and an additional regulatory subunit.

Its subcellular location is the cell membrane. It is found in the sarcolemma. It catalyses the reaction K(+)(out) + Na(+)(in) + ATP + H2O = K(+)(in) + Na(+)(out) + ADP + phosphate + H(+). This is the catalytic component of the active enzyme, which catalyzes the hydrolysis of ATP coupled with the exchange of sodium and potassium ions across the plasma membrane. This action creates the electrochemical gradient of sodium and potassium ions, providing the energy for active transport of various nutrients. The protein is Sodium/potassium-transporting ATPase subunit alpha-1 (atp1a1) of Oreochromis mossambicus (Mozambique tilapia).